The sequence spans 968 residues: RNA polymerase-associated protein RapA (968 aa).

The region spanning 163–332 (EVGRRFAPRV…FARLRLLDPD (170 aa)) is the Helicase ATP-binding domain. 176–183 (DEVGLGKT) contributes to the ATP binding site. Positions 278–281 (DEAH) match the DEAH box motif. The Helicase C-terminal domain occupies 491–641 (RVDWLINFLK…AFEQTCPSGH (151 aa)).

Belongs to the SNF2/RAD54 helicase family. RapA subfamily. Interacts with the RNAP. Has a higher affinity for the core RNAP than for the holoenzyme. Its ATPase activity is stimulated by binding to RNAP.

In terms of biological role, transcription regulator that activates transcription by stimulating RNA polymerase (RNAP) recycling in case of stress conditions such as supercoiled DNA or high salt concentrations. Probably acts by releasing the RNAP, when it is trapped or immobilized on tightly supercoiled DNA. Does not activate transcription on linear DNA. Probably not involved in DNA repair. This is RNA polymerase-associated protein RapA from Shewanella sediminis (strain HAW-EB3).